Here is a 251-residue protein sequence, read N- to C-terminus: Triosephosphate isomerase (251 aa).

Position 12–14 (12–14 (NWK)) interacts with substrate. Catalysis depends on His-99, which acts as the Electrophile. The active-site Proton acceptor is Glu-169. Substrate-binding positions include Gly-175, Ser-214, and 235 to 236 (GG).

It belongs to the triosephosphate isomerase family. In terms of assembly, homodimer.

Its subcellular location is the cytoplasm. The catalysed reaction is D-glyceraldehyde 3-phosphate = dihydroxyacetone phosphate. It functions in the pathway carbohydrate biosynthesis; gluconeogenesis. Its pathway is carbohydrate degradation; glycolysis; D-glyceraldehyde 3-phosphate from glycerone phosphate: step 1/1. Involved in the gluconeogenesis. Catalyzes stereospecifically the conversion of dihydroxyacetone phosphate (DHAP) to D-glyceraldehyde-3-phosphate (G3P). The sequence is that of Triosephosphate isomerase from Bradyrhizobium sp. (strain ORS 278).